We begin with the raw amino-acid sequence, 129 residues long: uncharacterized protein (129 aa).

An N-terminal signal peptide occupies residues 1-20 (MIYPLFRICILGAFLLGSYA).

This is an uncharacterized protein from Saccharomyces cerevisiae (strain ATCC 204508 / S288c) (Baker's yeast).